The primary structure comprises 228 residues: UPF0173 metal-dependent hydrolase lmo1577 (228 aa).

It belongs to the UPF0173 family.

This chain is UPF0173 metal-dependent hydrolase lmo1577, found in Listeria monocytogenes serovar 1/2a (strain ATCC BAA-679 / EGD-e).